The chain runs to 722 residues: MTTQNFLVEIGTEELPPKALKTLATSFADNVEAELNQAGLSFDKIEWFAAPRRLAVKVLNLATQQPSKEIEKRGPAVSAAFDAEGKPTKAAEGWARGCGITVEQAERIATDKGEWLVHRTKIKGQPTKNLLNDIVANALAKLPIPKPMRWADKTVQFIRPVHTVTMLLGDELIEGEILGVASARTIRGHRFLGEKEFDIQHADQYPQLLRDKGSVVADFNERKAEILAKSQAKATALGGVADIEESLLEEVTSLVEYPNVLAAKFEERFLAVPAEALVYTMKGDQKYFPIYDKDGRLLPHFIFVSNINPEDPTAIIEGNEKVVRPRLTDAEFFFKTDLKQKLVDRLPRLETVLFQQQLGTLKDKTDRIEQLAGEIAKQIGADEAKAKRAGLLSKCDLMTNMVFEFTDTQGVMGMHYARHDGEDEEVAVALNEQYMPRFAGDELPKSLVASAVALADKFDTLTGIFGIGQAPKGSADPFALRRAALGALRIIVEKNLPLDLNDIISKAFDLYKELDNERLRNAPIAKTRGGFSEYPEGYVSFFTRGDDLVPKQKILDEVVDFMLGRFRAWYQDEGIAVDVIQAVLARRPTRPADFDARVRAVSHFRTLDSAEALAAANKRVSNILAKAGAAIGEINLTACVEPAEKALAEAVLALRTEVQPLIAQGDYTAVLDKLANLRAPVDSFFDNVMVNAEDPALRQNRLAILNTLQGLFLQVADISVLQ.

The protein belongs to the class-II aminoacyl-tRNA synthetase family. Tetramer of two alpha and two beta subunits.

It is found in the cytoplasm. It carries out the reaction tRNA(Gly) + glycine + ATP = glycyl-tRNA(Gly) + AMP + diphosphate. The protein is Glycine--tRNA ligase beta subunit of Haemophilus influenzae (strain 86-028NP).